A 509-amino-acid chain; its full sequence is Heat shock 70 kDa protein 14 (509 aa).

It belongs to the heat shock protein 70 family. As to quaternary structure, component of ribosome-associated complex (RAC), a heterodimer composed of Hsp70/DnaK-type chaperone HSPA14 and Hsp40/DnaJ-type chaperone DNAJC2.

The protein resides in the cytoplasm. Its subcellular location is the cytosol. In terms of biological role, component of the ribosome-associated complex (RAC), a complex involved in folding or maintaining nascent polypeptides in a folding-competent state. In the RAC complex, binds to the nascent polypeptide chain, while DNAJC2 stimulates its ATPase activity. This is Heat shock 70 kDa protein 14 (Hspa14) from Mus musculus (Mouse).